A 159-amino-acid chain; its full sequence is Growth arrest and DNA damage-inducible protein GADD45 gamma (159 aa).

A homodimerization region spans residues 43–86 (VYESAKVLNVDPDNVTFCVLAAGEEDEGDIALQIHFTLIQAFCC).

Belongs to the GADD45 family. As to quaternary structure, undergoes concentration-dependent homodimerization, which is required for growth inhibititory activity and enhances interaction with PCNA. Interacts with GADD45GIP1. Interacts with PCNA.

Its function is as follows. Involved in the regulation of growth and apoptosis. Mediates activation of stress-responsive MTK1/MEKK4 MAPKKK. The chain is Growth arrest and DNA damage-inducible protein GADD45 gamma (GADD45G) from Homo sapiens (Human).